The primary structure comprises 1211 residues: DNA polymerase beta (1211 aa).

A run of 4 repeats spans residues 1074 to 1077 (KPAG), 1078 to 1081 (KPAG), 1082 to 1085 (NPAG), and 1086 to 1089 (NPAG). Residues 1074–1089 (KPAGKPAGNPAGNPAG) are 4 X 4 AA tandem repeats of [NK]-[P]-A-G.

This sequence belongs to the DNA polymerase type-B family.

It carries out the reaction DNA(n) + a 2'-deoxyribonucleoside 5'-triphosphate = DNA(n+1) + diphosphate. In terms of biological role, DNA-directed DNA polymerase involved in viral DNA replication. This chain is DNA polymerase beta (DPOL), found in African swine fever virus (strain Badajoz 1971 Vero-adapted) (Ba71V).